We begin with the raw amino-acid sequence, 428 residues long: MNYLFKNGRYMNEEGKIVATDLLVQDGKIAKVAENITADNAEVIEVNGNLIAPGLVDVHVHLREPGGEHKETIETGTLAAAKGGFTTICSMPNTRPVPDCREHMEDLQKRIKEKAHVNVLPYGAITVRQAGSEMTDFETLKELGAFAFTDDGVGVQDASMMLAAMKRAAKLNMAVVAHCEENTLINKGCVHEGKFSEKHGLNGIPSVCESVHIARDILLAEAADCHYHVCHVSTKGSVRVIRDAKRAGIKVTAEVTPHHLVLCEDDIPSVDPNFKMNPPLRGKEDHAALIEGLLDGTIDMIATDHAPHTAEEKAQGIERAPFGITGFETAFPLLYTNLVKKGIITLEQLIQFLTEKPADTFGLEAGRLKEGRTADITIIDLEQEEEIDPTTFLSKGKNTPFAGWKCQGWPVMTIVGGKIAWQKESALV.

2 residues coordinate Zn(2+): His59 and His61. Residues 61–63 and Asn93 contribute to the substrate site; that span reads HLR. Zn(2+)-binding residues include Asp151, His178, and His231. A substrate-binding site is contributed by Asn277. Position 304 (Asp304) interacts with Zn(2+). Asp304 is a catalytic residue. Substrate-binding positions include His308 and 322–323; that span reads FG.

This sequence belongs to the metallo-dependent hydrolases superfamily. DHOase family. Class I DHOase subfamily. Requires Zn(2+) as cofactor.

The enzyme catalyses (S)-dihydroorotate + H2O = N-carbamoyl-L-aspartate + H(+). It functions in the pathway pyrimidine metabolism; UMP biosynthesis via de novo pathway; (S)-dihydroorotate from bicarbonate: step 3/3. In terms of biological role, catalyzes the reversible cyclization of carbamoyl aspartate to dihydroorotate. The sequence is that of Dihydroorotase from Bacillus cereus (strain G9842).